We begin with the raw amino-acid sequence, 243 residues long: 4-hydroxy-tetrahydrodipicolinate reductase (243 aa).

Residues 9–14 (GANGKM), 78–80 (GTS), and 104–107 (APNF) contribute to the NAD(+) site. His134 functions as the Proton donor/acceptor in the catalytic mechanism. Position 135 (His135) interacts with (S)-2,3,4,5-tetrahydrodipicolinate. Lys138 (proton donor) is an active-site residue. Residue 144-145 (GT) coordinates (S)-2,3,4,5-tetrahydrodipicolinate.

Belongs to the DapB family.

It localises to the cytoplasm. It carries out the reaction (S)-2,3,4,5-tetrahydrodipicolinate + NAD(+) + H2O = (2S,4S)-4-hydroxy-2,3,4,5-tetrahydrodipicolinate + NADH + H(+). The catalysed reaction is (S)-2,3,4,5-tetrahydrodipicolinate + NADP(+) + H2O = (2S,4S)-4-hydroxy-2,3,4,5-tetrahydrodipicolinate + NADPH + H(+). It functions in the pathway amino-acid biosynthesis; L-lysine biosynthesis via DAP pathway; (S)-tetrahydrodipicolinate from L-aspartate: step 4/4. Functionally, catalyzes the conversion of 4-hydroxy-tetrahydrodipicolinate (HTPA) to tetrahydrodipicolinate. The protein is 4-hydroxy-tetrahydrodipicolinate reductase of Legionella pneumophila (strain Lens).